Reading from the N-terminus, the 422-residue chain is Zinc finger protein zfp-2 (422 aa).

The tract at residues 95-119 (AIPCTSSSMQPSTSSNPSSGEHQPV) is disordered. Positions 99 to 113 (TSSSMQPSTSSNPSS) are enriched in low complexity. 7 C2H2-type zinc fingers span residues 171 to 194 (YRCTNCKTYFGNKEVYQRHIQEVH), 200 to 222 (FRCFNCGMRFANKTSMTHHLKDH), 229 to 251 (FSCDYCPRIFSKLESKTRHHKMH), 255 to 278 (STCQTCMRFFTTEDALRHHQSTAH), 300 to 322 (YSCSYCNLRFHFKKDMLVHERIH), 328 to 350 (YSCGYCMKSFAQSQALTAHIRTH), and 356 to 379 (YGCGKCDKRFRDNSCLRKHELAAH).

Expressed in vulval cells and all somatic gonad structures such as spermatheca, sheath cells, uterine cells and distal tip cells.

It localises to the nucleus. Functionally, probable zinc finger transcription factor that acts as a transcriptional repressor. Acts redundantly with the transcriptional repressor lin-35 to control the development of somatic gonad lineages. May, in addition, suppress sensitivity to RNAi. The sequence is that of Zinc finger protein zfp-2 from Caenorhabditis elegans.